The chain runs to 467 residues: Hexon protein (467 aa).

The segment at 1–54 is disordered; sequence AYNALAPKGAPNSCEWEQEEPTQEMAGELEDEEEAEEEEAEEEAEAPQAGQKVK. Acidic residues predominate over residues 16–45; that stretch reads WEQEEPTQEMAGELEDEEEAEEEEAEEEAE.

The protein belongs to the adenoviridae hexon protein family. In terms of assembly, homotrimer. Interacts with the capsid vertex protein; this interaction binds the peripentonal hexons to the neighboring penton base. Interacts with the hexon-linking protein; this interaction tethers the hexons surrounding the penton to those situated in the central plate of the facet. Interacts with the hexon-interlacing protein; this interaction lashes the hexons together. Interacts with host dyneins DYNC1LI1 and DYNC1I2; this interaction might be involved in intracellular microtubule-dependent transport of incoming viral capsid. Interacts with the shutoff protein; this interaction allows folding and formation of hexons trimers. Interacts with pre-protein VI; this interaction probably allows nuclear import of hexon trimers and possibly pre-capsid assembly.

It is found in the virion. It localises to the host nucleus. Major capsid protein that self-associates to form 240 hexon trimers, each in the shape of a hexagon, building most of the pseudo T=25 capsid. Assembled into trimeric units with the help of the chaperone shutoff protein. Transported by pre-protein VI to the nucleus where it associates with other structural proteins to form an empty capsid. Might be involved, through its interaction with host dyneins, in the intracellular microtubule-dependent transport of incoming viral capsid to the nucleus. In Homo sapiens (Human), this protein is Hexon protein.